We begin with the raw amino-acid sequence, 399 residues long: Tyrosine--tRNA ligase (399 aa).

The 'HIGH' region signature appears at 44 to 53 (PTAPDLHLGH). The short motif at 229–233 (KMSKS) is the 'KMSKS' region element. An ATP-binding site is contributed by Lys232. The region spanning 338 to 398 (ISITKALVDC…GKRKFAKLKV (61 aa)) is the S4 RNA-binding domain.

This sequence belongs to the class-I aminoacyl-tRNA synthetase family. TyrS type 2 subfamily. Homodimer.

It localises to the cytoplasm. The enzyme catalyses tRNA(Tyr) + L-tyrosine + ATP = L-tyrosyl-tRNA(Tyr) + AMP + diphosphate + H(+). Its function is as follows. Catalyzes the attachment of tyrosine to tRNA(Tyr) in a two-step reaction: tyrosine is first activated by ATP to form Tyr-AMP and then transferred to the acceptor end of tRNA(Tyr). This is Tyrosine--tRNA ligase from Sulfurimonas denitrificans (strain ATCC 33889 / DSM 1251) (Thiomicrospira denitrificans (strain ATCC 33889 / DSM 1251)).